The chain runs to 412 residues: Type II methyltransferase M.Sau3AI (412 aa).

Positions 4–402 (IKVVELFAGV…NQIEKIDSIT (399 aa)) constitute an SAM-dependent MTase C5-type domain. Residue cysteine 85 is part of the active site.

The protein belongs to the class I-like SAM-binding methyltransferase superfamily. C5-methyltransferase family.

The enzyme catalyses a 2'-deoxycytidine in DNA + S-adenosyl-L-methionine = a 5-methyl-2'-deoxycytidine in DNA + S-adenosyl-L-homocysteine + H(+). Functionally, a methylase that recognizes the double-stranded sequence 5'-GATC-3', methylates C-4 on both strands and protects the DNA from cleavage by the Sau3AI endonuclease. This chain is Type II methyltransferase M.Sau3AI (sau3AIM), found in Staphylococcus aureus.